A 366-amino-acid chain; its full sequence is Isocitrate dehydrogenase [NAD] subunit alpha, mitochondrial (366 aa).

Residues 1–27 (MAGPAWISKVSRLLGAFHNPKQVTRGF) constitute a mitochondrion transit peptide. Position 77 is an N6-succinyllysine (K77). The residue at position 101 (T101) is a Phosphothreonine. Substrate contacts are provided by R115, R125, and R146. Position 223 is an N6-acetyllysine (K223). Residues D233, D257, and D261 each coordinate Mg(2+). Residue K343 is modified to N6-acetyllysine; alternate. K343 bears the N6-succinyllysine; alternate mark. The residue at position 350 (K350) is an N6-succinyllysine.

The protein belongs to the isocitrate and isopropylmalate dehydrogenases family. Heterooligomer of subunits alpha (IDH3A), beta (IDH3B), and gamma (IDH3G) in the apparent ratio of 2:1:1. The heterodimer containing one IDH3A and one IDH3B subunit and the heterodimer containing one IDH3A and one IDH3G subunit assemble into a heterotetramer (which contains two subunits of IDH3A, one of IDH3B and one of IDH3G) and further into the heterooctamer. It depends on Mg(2+) as a cofactor. Requires Mn(2+) as cofactor.

The protein resides in the mitochondrion. The catalysed reaction is D-threo-isocitrate + NAD(+) = 2-oxoglutarate + CO2 + NADH. The heterotetramer and the heterodimer composed of IDH3A and IDH3G subunits can be allosterically activated by citrate (CIT) or/and ADP, and the two activators can act independently or synergistically. The heterodimer composed of IDH3A and IDH3B subunits cannot be allosterically regulated and the allosteric regulation of the heterotetramer is through the IDH3G subunit and not the IDH3B subunit. The IDH3G subunit contains the allosteric site which consists of a CIT-binding site and an ADP-binding site, and the binding of CIT and ADP causes conformational changes at the allosteric site which are transmitted to the active site in the catalytic subunit (IDH3A) through a cascade of conformational changes at the heterodimer interface, leading to stabilization of the isocitrate-binding at the active site and thus activation of the enzyme. ATP can activate the heterotetramer and the heterodimer composed of IDH3A and IDH3G subunits at low concentrations but inhibits their activities at high concentrations, whereas ATP exhibits only inhibitory effect on the heterodimer composed of IDH3A and IDH3B subunits. Catalytic subunit of the enzyme which catalyzes the decarboxylation of isocitrate (ICT) into alpha-ketoglutarate. The heterodimer composed of the alpha (IDH3A) and beta (IDH3B) subunits and the heterodimer composed of the alpha (IDH3A) and gamma (IDH3G) subunits, have considerable basal activity but the full activity of the heterotetramer (containing two subunits of IDH3A, one of IDH3B and one of IDH3G) requires the assembly and cooperative function of both heterodimers. This chain is Isocitrate dehydrogenase [NAD] subunit alpha, mitochondrial, found in Pongo abelii (Sumatran orangutan).